The chain runs to 232 residues: Flagellar L-ring protein (232 aa).

An N-terminal signal peptide occupies residues 1 to 21 (MQKYALHAYPVMALMVATLTG). The N-palmitoyl cysteine moiety is linked to residue cysteine 22. The S-diacylglycerol cysteine moiety is linked to residue cysteine 22.

The protein belongs to the FlgH family. The basal body constitutes a major portion of the flagellar organelle and consists of four rings (L,P,S, and M) mounted on a central rod.

The protein resides in the cell outer membrane. Its subcellular location is the bacterial flagellum basal body. In terms of biological role, assembles around the rod to form the L-ring and probably protects the motor/basal body from shearing forces during rotation. In Salmonella gallinarum (strain 287/91 / NCTC 13346), this protein is Flagellar L-ring protein.